We begin with the raw amino-acid sequence, 420 residues long: Protein translocase subunit SecY (420 aa).

Helical transmembrane passes span 9–29 (ILIT…PIPG), 61–81 (LSII…MELL), 104–124 (IVRY…SVGL), 141–161 (VFMI…MWIG), 173–193 (ISLI…SGTF), 203–223 (ILML…IIYV), 257–277 (LSGV…STIL), 300–320 (YNIL…SIVF), 355–375 (KLTL…WILV), and 377–397 (AMGV…QVAI).

It belongs to the SecY/SEC61-alpha family. Component of the Sec protein translocase complex. Heterotrimer consisting of SecY, SecE and SecG subunits. The heterotrimers can form oligomers, although 1 heterotrimer is thought to be able to translocate proteins. Interacts with the ribosome. Interacts with SecDF, and other proteins may be involved. Interacts with SecA.

It localises to the cell inner membrane. Its function is as follows. The central subunit of the protein translocation channel SecYEG. Consists of two halves formed by TMs 1-5 and 6-10. These two domains form a lateral gate at the front which open onto the bilayer between TMs 2 and 7, and are clamped together by SecE at the back. The channel is closed by both a pore ring composed of hydrophobic SecY resides and a short helix (helix 2A) on the extracellular side of the membrane which forms a plug. The plug probably moves laterally to allow the channel to open. The ring and the pore may move independently. In Helicobacter pylori (strain J99 / ATCC 700824) (Campylobacter pylori J99), this protein is Protein translocase subunit SecY.